A 498-amino-acid polypeptide reads, in one-letter code: Hexokinase-1 (498 aa).

The region spanning 39–492 (AAAQRVVAEL…SGLGAALVAA (454 aa)) is the Hexokinase domain. Residues 95–233 (TGGEEGSYYA…GLDMRVSALI (139 aa)) form a hexokinase small subdomain region. ADP contacts are provided by Gly-109, Thr-110, and Asn-111. D-glucose-binding residues include Thr-199, Lys-200, Asn-234, and Asp-235. A hexokinase large subdomain region spans residues 234–481 (NDTVGTLAAG…ERVVVKLASD (248 aa)). An ADP-binding site is contributed by Thr-258. The D-glucose site is built by Asn-261, Glu-290, and Glu-321. Gly-446 contributes to the ADP binding site.

The protein belongs to the hexokinase family. In terms of tissue distribution, highly expressed in senescent leaves.

The catalysed reaction is a D-hexose + ATP = a D-hexose 6-phosphate + ADP + H(+). The enzyme catalyses D-fructose + ATP = D-fructose 6-phosphate + ADP + H(+). It carries out the reaction D-glucose + ATP = D-glucose 6-phosphate + ADP + H(+). Its pathway is carbohydrate metabolism; hexose metabolism. The protein operates within carbohydrate degradation; glycolysis; D-glyceraldehyde 3-phosphate and glycerone phosphate from D-glucose: step 1/4. Functionally, fructose and glucose phosphorylating enzyme. Acts as a positive regulator of leaf senescence by mediating glucose accumulation and inducing an increase in reactive oxygen species (ROS). This is Hexokinase-1 (HXK1) from Oryza sativa subsp. japonica (Rice).